Consider the following 100-residue polypeptide: MKISEEEVRHVANLSKLRFSDQETKEFASSLSKIVDMIELLNEVDTEGVPVTTTMADRKTVMREDIAQPGHNRDDLFKNVPQHQDYYIKVPAILEDGGDA.

This sequence belongs to the GatC family. Heterotrimer of A, B and C subunits.

It catalyses the reaction L-glutamyl-tRNA(Gln) + L-glutamine + ATP + H2O = L-glutaminyl-tRNA(Gln) + L-glutamate + ADP + phosphate + H(+). The enzyme catalyses L-aspartyl-tRNA(Asn) + L-glutamine + ATP + H2O = L-asparaginyl-tRNA(Asn) + L-glutamate + ADP + phosphate + 2 H(+). Its function is as follows. Allows the formation of correctly charged Asn-tRNA(Asn) or Gln-tRNA(Gln) through the transamidation of misacylated Asp-tRNA(Asn) or Glu-tRNA(Gln) in organisms which lack either or both of asparaginyl-tRNA or glutaminyl-tRNA synthetases. The reaction takes place in the presence of glutamine and ATP through an activated phospho-Asp-tRNA(Asn) or phospho-Glu-tRNA(Gln). This is Aspartyl/glutamyl-tRNA(Asn/Gln) amidotransferase subunit C from Streptococcus agalactiae serotype Ia (strain ATCC 27591 / A909 / CDC SS700).